We begin with the raw amino-acid sequence, 161 residues long: Endoribonuclease YbeY (161 aa).

Zn(2+)-binding residues include H121, H125, and H131.

Belongs to the endoribonuclease YbeY family. The cofactor is Zn(2+).

It is found in the cytoplasm. Its function is as follows. Single strand-specific metallo-endoribonuclease involved in late-stage 70S ribosome quality control and in maturation of the 3' terminus of the 16S rRNA. The protein is Endoribonuclease YbeY of Xanthomonas campestris pv. campestris (strain 8004).